The following is a 341-amino-acid chain: Glycerol-3-phosphate dehydrogenase [NAD(P)+] (341 aa).

Residues S11, W12, R33, and K106 each contribute to the NADPH site. Positions 106, 137, and 139 each coordinate sn-glycerol 3-phosphate. Residue A141 participates in NADPH binding. The sn-glycerol 3-phosphate site is built by K192, D245, S255, R256, and N257. The active-site Proton acceptor is the K192. NADPH is bound at residue R256. Positions 280 and 282 each coordinate NADPH.

This sequence belongs to the NAD-dependent glycerol-3-phosphate dehydrogenase family.

The protein localises to the cytoplasm. The catalysed reaction is sn-glycerol 3-phosphate + NAD(+) = dihydroxyacetone phosphate + NADH + H(+). The enzyme catalyses sn-glycerol 3-phosphate + NADP(+) = dihydroxyacetone phosphate + NADPH + H(+). The protein operates within membrane lipid metabolism; glycerophospholipid metabolism. Functionally, catalyzes the reduction of the glycolytic intermediate dihydroxyacetone phosphate (DHAP) to sn-glycerol 3-phosphate (G3P), the key precursor for phospholipid synthesis. In Bacillus cytotoxicus (strain DSM 22905 / CIP 110041 / 391-98 / NVH 391-98), this protein is Glycerol-3-phosphate dehydrogenase [NAD(P)+].